A 265-amino-acid chain; its full sequence is MNIAIAGASGRMGRMLIEQVLNTEGVTLSGALDVPGSPALGQDAGLFLGRNTGVAITADLEAGLAGADCLIDFTRPEGTLVHLAAAKQLGVKMVVGTTGFDEAGKAALAEAAKSIGIVFAANFSVGVNATFKLLEVAAKLLSTGYDIEVIEAHHRFKVDAPSGTALKMGEVIADALGRDLKTCGVFAREGHTGERDPNSIGFATIRGGDIVGDHTVMFAGIGERIEISHKSSSRQSYADGAVRSARFLADKPTGLFDMQDVLGLK.

NAD(+) is bound by residues glycine 7–methionine 12, aspartate 33, glycine 96–threonine 98, and alanine 120–phenylalanine 123. Residue histidine 153 is the Proton donor/acceptor of the active site. (S)-2,3,4,5-tetrahydrodipicolinate is bound at residue histidine 154. The Proton donor role is filled by lysine 157. Glycine 163–threonine 164 is a (S)-2,3,4,5-tetrahydrodipicolinate binding site.

It belongs to the DapB family.

It is found in the cytoplasm. It carries out the reaction (S)-2,3,4,5-tetrahydrodipicolinate + NAD(+) + H2O = (2S,4S)-4-hydroxy-2,3,4,5-tetrahydrodipicolinate + NADH + H(+). It catalyses the reaction (S)-2,3,4,5-tetrahydrodipicolinate + NADP(+) + H2O = (2S,4S)-4-hydroxy-2,3,4,5-tetrahydrodipicolinate + NADPH + H(+). The protein operates within amino-acid biosynthesis; L-lysine biosynthesis via DAP pathway; (S)-tetrahydrodipicolinate from L-aspartate: step 4/4. In terms of biological role, catalyzes the conversion of 4-hydroxy-tetrahydrodipicolinate (HTPA) to tetrahydrodipicolinate. This Cupriavidus taiwanensis (strain DSM 17343 / BCRC 17206 / CCUG 44338 / CIP 107171 / LMG 19424 / R1) (Ralstonia taiwanensis (strain LMG 19424)) protein is 4-hydroxy-tetrahydrodipicolinate reductase.